Reading from the N-terminus, the 103-residue chain is Conantokin R1-A (103 aa).

An N-terminal signal peptide occupies residues 1–21 (MQLYTYLYLLVPLVTFHLILG). Positions 22 to 79 (TGTLDHGGALTERRSTDATALKPEPVLQKSAARSTDDNGKDRLTQMKRILKKRGNNPR) are excised as a propeptide. A disordered region spans residues 34–83 (RRSTDATALKPEPVLQKSAARSTDDNGKDRLTQMKRILKKRGNNPRADEE). The span at 55-65 (STDDNGKDRLT) shows a compositional bias: basic and acidic residues. 3 positions are modified to 4-carboxyglutamate: E82, E83, and E89.

This sequence belongs to the conotoxin B superfamily. Ca(2+) is required as a cofactor. Mg(2+) serves as cofactor. As to expression, expressed by the venom duct.

It is found in the secreted. Functionally, conantokins inhibit N-methyl-D-aspartate (NMDA) receptors. This toxin has the highest potency for the NR2B/GRIN2B subunit (IC(50)=0.11 uM), followed by NR2D/GRIN2D (IC(50)=0.48 uM), NR2A/GRIN2A (IC(50)=2.1 uM), and NR2C/GRIN2C (IC(50)=6.1 uM) subunits when tested on rat receptors. The chain is Conantokin R1-A from Conus rolani (Cone snail).